Here is a 362-residue protein sequence, read N- to C-terminus: 3-dehydroquinate synthase (362 aa).

NAD(+) is bound by residues 71-76 (DGEQYK), 105-109 (GVIGD), 129-130 (TT), K142, K151, and 169-172 (CLQT). E184, H247, and H264 together coordinate Zn(2+).

It belongs to the sugar phosphate cyclases superfamily. Dehydroquinate synthase family. The cofactor is Co(2+). Zn(2+) serves as cofactor. Requires NAD(+) as cofactor.

Its subcellular location is the cytoplasm. It catalyses the reaction 7-phospho-2-dehydro-3-deoxy-D-arabino-heptonate = 3-dehydroquinate + phosphate. It participates in metabolic intermediate biosynthesis; chorismate biosynthesis; chorismate from D-erythrose 4-phosphate and phosphoenolpyruvate: step 2/7. In terms of biological role, catalyzes the conversion of 3-deoxy-D-arabino-heptulosonate 7-phosphate (DAHP) to dehydroquinate (DHQ). This chain is 3-dehydroquinate synthase, found in Cronobacter sakazakii (strain ATCC BAA-894) (Enterobacter sakazakii).